The sequence spans 379 residues: All-trans-retinol dehydrogenase [NAD(+)] ADH4 (379 aa).

Thr-1 carries the post-translational modification N-acetylthreonine. Positions 46, 68, 98, 101, 104, 112, and 179 each coordinate Zn(2+). NAD(+) contacts are provided by residues Gly-204 to Gly-209, Asp-228, Lys-233, Val-297 to Val-299, and Arg-374.

Belongs to the zinc-containing alcohol dehydrogenase family. Class-II subfamily. As to quaternary structure, homodimer. Requires Zn(2+) as cofactor.

It is found in the cytoplasm. The catalysed reaction is all-trans-retinol + NAD(+) = all-trans-retinal + NADH + H(+). The enzyme catalyses 9-cis-retinol + NAD(+) = 9-cis-retinal + NADH + H(+). It catalyses the reaction 20-oxo-(5Z,8Z,11Z,14Z)-eicosatetraenoate + NAD(+) + H2O = (5Z,8Z,11Z,14Z)-eicosatetraenedioate + NADH + 2 H(+). It carries out the reaction 20-hydroxy-(5Z,8Z,11Z,14Z)-eicosatetraenoate + NAD(+) = 20-oxo-(5Z,8Z,11Z,14Z)-eicosatetraenoate + NADH + H(+). The catalysed reaction is 1,4-benzoquinone + NADH + H(+) = hydroquinone + NAD(+). With respect to regulation, oxidation of 20-HETE is inhibited by low concentrations of N-heptylformamide. Oxidation of 20-HETE is a decreased by 55-65% by either all-trans-retinol or all-trans-retinoic acid. Strongly inhibited by omega-hydroxy fatty acids. Catalyzes the NAD-dependent oxidation of either all-trans-retinol or 9-cis-retinol. Also oxidizes long chain omega-hydroxy fatty acids, such as 20-HETE, producing both the intermediate aldehyde, 20-oxoarachidonate and the end product, a dicarboxylic acid, (5Z,8Z,11Z,14Z)-eicosatetraenedioate. Also catalyzes the reduction of benzoquinones. The protein is All-trans-retinol dehydrogenase [NAD(+)] ADH4 of Struthio camelus (Common ostrich).